Reading from the N-terminus, the 786-residue chain is Neprilysin-3 (786 aa).

The Cytoplasmic segment spans residues 1–52 (MTRYKQTEFTEDDSSSIGGIQLNEATGHTGMQIRYHTARATWNWRSRNKTEK). The chain crosses the membrane as a helical; Signal-anchor for type II membrane protein span at residues 53-73 (WLLITTFVMAITIFTLLIVLF). The Extracellular portion of the chain corresponds to 74 to 786 (TDGGSSDATK…MNPTEKCEVW (713 aa)). In terms of domain architecture, Peptidase M13 spans 102–786 (PCLNKHCIFA…MNPTEKCEVW (685 aa)). 5 cysteine pairs are disulfide-bonded: Cys-103–Cys-108, Cys-126–Cys-771, Cys-134–Cys-731, Cys-190–Cys-450, and Cys-659–Cys-783. N-linked (GlcNAc...) asparagine glycosylation is found at Asn-216, Asn-226, Asn-256, Asn-279, Asn-305, Asn-325, Asn-356, Asn-388, Asn-496, and Asn-569. His-622 contributes to the Zn(2+) binding site. Glu-623 is a catalytic residue. Zn(2+) is bound by residues His-626 and Glu-682. The active-site Proton donor is the Asp-686. N-linked (GlcNAc...) asparagine glycosylation is present at Asn-715.

It belongs to the peptidase M13 family. The cofactor is Zn(2+).

It localises to the cell membrane. It catalyses the reaction Preferential cleavage of polypeptides between hydrophobic residues, particularly with Phe or Tyr at P1'.. Functionally, metalloendoprotease which is required in the dorsal paired medial neurons for the proper formation of long-term (LTM) and middle-term memories (MTM). Also required in the mushroom body neurons where it functions redundantly with neprilysins Nep2 and Nep4 in normal LTM formation. This Drosophila melanogaster (Fruit fly) protein is Neprilysin-3.